A 606-amino-acid polypeptide reads, in one-letter code: Ubiquitin-like modifier-activating enzyme ATG7 (606 aa).

A GXGXXG motif motif is present at residues 316–321; the sequence is GSGTLG. Cysteine 488 functions as the Glycyl thioester intermediate in the catalytic mechanism. The interval 567-606 is homodimerization; sequence ALDDYKCVEKLSGLSKVQEEAELALEEDFDFSEDDEFVTG.

It belongs to the ATG7 family. As to quaternary structure, homodimer. Interacts with ATG8 through a thioester bond between Cys-488 and the C-terminal Gly of ATG8 and with ATG12 through a thioester bond between Cys-488 and the C-terminal Gly of ATG12. Also interacts with ATG3.

The protein localises to the cytoplasm. It localises to the preautophagosomal structure. Functionally, E1-like activating enzyme involved in the 2 ubiquitin-like systems required for cytoplasm to vacuole transport (Cvt) and autophagy. Activates ATG12 for its conjugation with ATG5 and ATG8 for its conjugation with phosphatidylethanolamine. Both systems are needed for the ATG8 association to Cvt vesicles and autophagosomes membranes. Autophagy is essential for maintenance of amino acid levels and protein synthesis under nitrogen starvation. Required for selective autophagic degradation of the nucleus (nucleophagy) as well as for mitophagy which contributes to regulate mitochondrial quantity and quality by eliminating the mitochondria to a basal level to fulfill cellular energy requirements and preventing excess ROS production. The polypeptide is Ubiquitin-like modifier-activating enzyme ATG7 (Kluyveromyces marxianus (strain DMKU3-1042 / BCC 29191 / NBRC 104275) (Yeast)).